Here is a 154-residue protein sequence, read N- to C-terminus: Ascorbate-specific PTS system EIIA component (154 aa).

In terms of domain architecture, PTS EIIA type-2 spans 6-150 (SLAENNSIRL…QEVLDLIDRT (145 aa)). His-68 acts as the Tele-phosphohistidine intermediate in catalysis. His-68 is subject to Phosphohistidine.

It is found in the cytoplasm. The phosphoenolpyruvate-dependent sugar phosphotransferase system (sugar PTS), a major carbohydrate active transport system, catalyzes the phosphorylation of incoming sugar substrates concomitantly with their translocation across the cell membrane. The enzyme II UlaABC PTS system is involved in ascorbate transport. The sequence is that of Ascorbate-specific PTS system EIIA component (ulaC) from Salmonella choleraesuis (strain SC-B67).